The sequence spans 251 residues: Blue-light absorbing proteorhodopsin (251 aa).

The signal sequence occupies residues 1 to 18 (MGKLLLILGSAIALPSFA). Transmembrane regions (helical) follow at residues 30-50 (VGVS…FFFV), 65-85 (VSGL…GVWI), 97-117 (IDWL…LAAC), 120-140 (VAAS…GAGF), 144-164 (AGLA…LYMI), 190-210 (MMMI…AGYL), and 223-243 (LIYN…IWNV). Position 233 is an N6-(retinylidene)lysine (Lys-233).

This sequence belongs to the archaeal/bacterial/fungal opsin family. Post-translationally, contains one covalently linked retinal chromophore.

It is found in the cell membrane. Light-driven proton pump. May have a regulatory rather than energy harvesting function, based on light-induced opening of proton channels, to modulate cell physiology depending on light intensity variations. Could be, therefore, a sensory rhodopsin, potentially associated with a transducer component. This Gamma-proteobacterium Hot 75m4 protein is Blue-light absorbing proteorhodopsin.